The following is a 748-amino-acid chain: Wings apart-like protein homolog 1 (748 aa).

2 disordered regions span residues 23–199 (TLAQ…VYAT) and 614–644 (EGGC…RLDR). The segment covering 35–64 (PSVRSSDSPDVPDTPDVPVNQLSSPPLSLP) has biased composition (low complexity). Polar residues-rich tracts occupy residues 68–79 (SEGNAETLQNLS) and 87–96 (LSQSSTSSLN). Positions 172–182 (ISSSSNRYSSR) are enriched in low complexity. The 519-residue stretch at 205–723 (KPLASGYGSR…KRLYDFTKAT (519 aa)) folds into the WAPL domain. A compositionally biased stretch (acidic residues) spans 616 to 633 (GCGDEEEEEEGGDESSDE). The segment covering 634-644 (DGVRKDGRLDR) has biased composition (basic and acidic residues).

This sequence belongs to the WAPL family.

It localises to the nucleus. Its function is as follows. Regulator of meiotic chromosome structure and function, playing a role in sister chromatid cohesion, possibly via antagonizing the coh-3/-4 association with axial elements in nuclei during late prophase, cohesin association with chromatin, DNA double strand break repair and polar body positioning following meiotic divisions during oogenesis. Regulates the morphogenesis and temporal assembly of axial elements to control the organization of meiotic chromosomes in pachytene nuclei and is also involved in meiotic chromosomal remodeling in late pachytene nuclei. Required for the removal of the cohesin component scc-1 from mitotic chromosomes. This chain is Wings apart-like protein homolog 1, found in Caenorhabditis elegans.